The following is a 268-amino-acid chain: ClpXP adapter protein SpxH (268 aa).

This sequence belongs to the SpxH family. As to quaternary structure, interacts with Spx.

The protein localises to the cytoplasm. In terms of biological role, adapter protein required for efficient degradation of Spx by ClpXP under non-stress conditions. Interaction with Spx stabilizes Spx and exposes the C-terminus of Spx for recognition and proteolysis by ClpXP. This Staphylococcus aureus (strain COL) protein is ClpXP adapter protein SpxH.